A 102-amino-acid polypeptide reads, in one-letter code: Small ribosomal subunit protein uS10 (102 aa).

The protein belongs to the universal ribosomal protein uS10 family. As to quaternary structure, part of the 30S ribosomal subunit.

Functionally, involved in the binding of tRNA to the ribosomes. This Bifidobacterium animalis subsp. lactis (strain AD011) protein is Small ribosomal subunit protein uS10.